The chain runs to 257 residues: NAD-capped RNA hydrolase NudC (257 aa).

Residues Lys-27 and Arg-71 each contribute to the substrate site. 2 residues coordinate Zn(2+): Cys-100 and Cys-103. Glu-113 serves as a coordination point for substrate. Cys-118 and Cys-121 together coordinate Zn(2+). Residue Tyr-126 coordinates substrate. The Nudix hydrolase domain occupies Pro-127–Ile-251. A divalent metal cation-binding residues include Ala-160, Glu-176, and Glu-180. The short motif at Gly-161 to Asn-182 is the Nudix box element. Gln-194–Ser-201 provides a ligand contact to substrate. Glu-221 serves as a coordination point for a divalent metal cation. Ala-243 contributes to the substrate binding site.

This sequence belongs to the Nudix hydrolase family. NudC subfamily. Homodimer. Mg(2+) is required as a cofactor. The cofactor is Mn(2+). Zn(2+) serves as cofactor.

The catalysed reaction is a 5'-end NAD(+)-phospho-ribonucleoside in mRNA + H2O = a 5'-end phospho-adenosine-phospho-ribonucleoside in mRNA + beta-nicotinamide D-ribonucleotide + 2 H(+). The enzyme catalyses NAD(+) + H2O = beta-nicotinamide D-ribonucleotide + AMP + 2 H(+). It carries out the reaction NADH + H2O = reduced beta-nicotinamide D-ribonucleotide + AMP + 2 H(+). MRNA decapping enzyme that specifically removes the nicotinamide adenine dinucleotide (NAD) cap from a subset of mRNAs by hydrolyzing the diphosphate linkage to produce nicotinamide mononucleotide (NMN) and 5' monophosphate mRNA. The NAD-cap is present at the 5'-end of some mRNAs and stabilizes RNA against 5'-processing. Has preference for mRNAs with a 5'-end purine. Catalyzes the hydrolysis of a broad range of dinucleotide pyrophosphates. The sequence is that of NAD-capped RNA hydrolase NudC from Photorhabdus laumondii subsp. laumondii (strain DSM 15139 / CIP 105565 / TT01) (Photorhabdus luminescens subsp. laumondii).